The sequence spans 141 residues: Putative pre-16S rRNA nuclease (141 aa).

The protein belongs to the YqgF nuclease family.

The protein resides in the cytoplasm. In terms of biological role, could be a nuclease involved in processing of the 5'-end of pre-16S rRNA. The protein is Putative pre-16S rRNA nuclease of Clostridioides difficile (strain 630) (Peptoclostridium difficile).